Consider the following 72-residue polypeptide: UPF0352 protein HI_0840 (72 aa).

Belongs to the UPF0352 family.

This is UPF0352 protein HI_0840 from Haemophilus influenzae (strain ATCC 51907 / DSM 11121 / KW20 / Rd).